Reading from the N-terminus, the 340-residue chain is Tryptophan--tRNA ligase (340 aa).

Residues 11–13 and 19–20 each bind ATP; these read RPT and GH. Positions 12–20 match the 'HIGH' region motif; the sequence is PTGKLHLGH. Asp140 serves as a coordination point for L-tryptophan. ATP-binding positions include 152–154, Leu194, and 202–206; these read GND and KMSKS. The 'KMSKS' region signature appears at 202 to 206; the sequence is KMSKS.

This sequence belongs to the class-I aminoacyl-tRNA synthetase family. In terms of assembly, homodimer.

It is found in the cytoplasm. It catalyses the reaction tRNA(Trp) + L-tryptophan + ATP = L-tryptophyl-tRNA(Trp) + AMP + diphosphate + H(+). In terms of biological role, catalyzes the attachment of tryptophan to tRNA(Trp). The sequence is that of Tryptophan--tRNA ligase from Streptococcus pyogenes serotype M1.